Consider the following 237-residue polypeptide: Neural retina-specific leucine zipper protein (237 aa).

Residues Lys20 and Lys24 each participate in a glycyl lysine isopeptide (Lys-Gly) (interchain with G-Cter in SUMO) cross-link. The disordered stretch occupies residues Val23–Gly57. Positions Gly30–Glu93 are minimal transactivation domain (MTD). The tract at residues Arg159–Arg185 is basic motif. The region spanning Arg159–Leu222 is the bZIP domain. Positions Leu187–Leu208 are leucine-zipper.

The protein belongs to the bZIP family. In terms of assembly, interacts with FIZ1; this interaction represses transactivation. Interacts (via the leucine-zipper domain) with CRX. Post-translationally, phosphorylated. Disumoylated at Lys-20. Sumoylation modulates the transcriptional activity of NRL on RHO and NR2E3 promoters, and is required for normal rod differentiation. In terms of tissue distribution, expressed in the brain and the retina. Expressed strongly in rod and cone cells (at protein level).

It is found in the cytoplasm. The protein resides in the nucleus. Functionally, acts as a transcriptional activator which regulates the expression of several rod-specific genes, including RHO and PDE6B. Also functions as a transcriptional coactivator, stimulating transcription mediated by the transcription factor CRX and NR2E3. Binds to the rhodopsin promoter in a sequence-specific manner. The protein is Neural retina-specific leucine zipper protein (NRL) of Homo sapiens (Human).